The following is a 258-amino-acid chain: Distal membrane-arm assembly complex protein 2 (258 aa).

Belongs to the ATP synthase subunit s family. As to quaternary structure, interacts with incompletely assembled mitochondrial NADH:ubiquinone oxidoreductase complex (complex I).

Its subcellular location is the mitochondrion. Its function is as follows. Required for the assembly of the mitochondrial NADH:ubiquinone oxidoreductase complex (complex I). Involved in the assembly of the distal region of complex I. The polypeptide is Distal membrane-arm assembly complex protein 2 (Dmac2) (Mus musculus (Mouse)).